The following is a 192-amino-acid chain: Ion-translocating oxidoreductase complex subunit A (192 aa).

6 helical membrane-spanning segments follow: residues 5–25 (LLLLVGTVLVNNFVLVKFLGL), 39–59 (IGMSMATTFVLTLASILSYLV), 65–85 (LPFDLGYLRTMSFILVIAVVV), 102–122 (ALGIYLPLITTNCAVLGVALL), 134–154 (AIFGFGAAVGFSLVLILFSAM), and 171–191 (AIAMVTAGLMSLAFMGFTGLV).

It belongs to the NqrDE/RnfAE family. As to quaternary structure, the complex is composed of six subunits: RnfA, RnfB, RnfC, RnfD, RnfE and RnfG.

Its subcellular location is the cell inner membrane. In terms of biological role, part of a membrane-bound complex that couples electron transfer with translocation of ions across the membrane. The sequence is that of Ion-translocating oxidoreductase complex subunit A from Shewanella piezotolerans (strain WP3 / JCM 13877).